Consider the following 490-residue polypeptide: MAHKDSVDVALIGAGVISTTLSVMLKQLQPDWSQVIIERLDTPGAESSDPWNNAGTGHSALCELNYTPEVNGKIDISKAVGVNEKFQVSRQFWSYLVEQNVLGDPSEFINKVPHVSFAQGMDQVDYLKARYEALKDHPLFPNMQYSDSDEKFAEFLPLMARGRDFNNPVAISWFDEGTDINYGALTRQYLDAVTAQGVEVRFGNEVKNINRDGSKWKITTKNLHTGDTSMVTANFVFIGAGGMALPLLQKAGIPEIKGYGGFPVSGQWLRCTNPELVEQHQAKVYGKASVGAPPMSVPHLDTRVIDGKKGLLFGPYAGWTPKFLKKGSYLDLFKSLRVGNLPSYLGVGVQEMGLTKYLIEEVLKDQAARVESLREYMPEARAEDWELVTAGQRVQVIKPIGAPKFGSLEFGTALINSNDGSIAGLMGASPGASIAPSAMLEVLERCFGNRIADWAPKLREMIPSYGTRLSKDANLFNEQWDRSQKALKLV.

This sequence belongs to the MQO family. FAD is required as a cofactor.

The enzyme catalyses (S)-malate + a quinone = a quinol + oxaloacetate. Its pathway is carbohydrate metabolism; tricarboxylic acid cycle; oxaloacetate from (S)-malate (quinone route): step 1/1. This chain is Probable malate:quinone oxidoreductase, found in Corynebacterium jeikeium (strain K411).